A 172-amino-acid chain; its full sequence is Probable metallophosphoesterase MTH_1774 (172 aa).

Asp8, His10, Asp37, Asn59, His85, His113, and His115 together coordinate a divalent metal cation.

The protein belongs to the metallophosphoesterase superfamily. YfcE family. A divalent metal cation serves as cofactor.

This chain is Probable metallophosphoesterase MTH_1774, found in Methanothermobacter thermautotrophicus (strain ATCC 29096 / DSM 1053 / JCM 10044 / NBRC 100330 / Delta H) (Methanobacterium thermoautotrophicum).